A 556-amino-acid polypeptide reads, in one-letter code: Jerky protein homolog (556 aa).

Residues 11 to 62 enclose the HTH psq-type domain; that stretch reads RGEKRKRVVLTLKEKIDICTRLEKGESRKALMQEYNVGMSTLYDIRAHKAQL. DNA-binding regions (H-T-H motif) lie at residues 38–58 and 110–142; these read RKALMQEYNVGMSTLYDIRAH and PMLIEKAKDFYEQMQLTEPCVFSGGWLWRFKAR. In terms of domain architecture, HTH CENPB-type spans 77–149; that stretch reads QRRTLHTPKL…KARHGIKKLD (73 aa). Positions 213-382 constitute a DDE-1 domain; that stretch reads KDRLTVLMCA…VPSHVFRRAW (170 aa). S414 carries the post-translational modification Phosphoserine. Residues 439-482 form a disordered region; sequence SWGVAGREAEGGRPPAATSPAEVVWSSEKTPKADQDGRGDPGEG. Over residues 467–479 the composition is skewed to basic and acidic residues; it reads KTPKADQDGRGDP.

It belongs to the tigger transposable element derived protein family. In terms of tissue distribution, expressed ubiquitously.

It localises to the nucleus. Functionally, may bind DNA. This Homo sapiens (Human) protein is Jerky protein homolog.